The sequence spans 85 residues: MKFCVAVSLLIIASMAGVISVSGYDVYPRDYAGNYYYCGVRKDPDCSKVCKLHGATVGYCHVKRCSCVDLPEKNQNFLSVIWKQC.

A signal peptide spans 1–23; that stretch reads MKFCVAVSLLIIASMAGVISVSG. The 62-residue stretch at 24-85 folds into the LCN-type CS-alpha/beta domain; that stretch reads YDVYPRDYAG…NFLSVIWKQC (62 aa). 3 disulfides stabilise this stretch: Cys-38-Cys-60, Cys-46-Cys-65, and Cys-50-Cys-67.

The protein belongs to the long (3 C-C) scorpion toxin superfamily. As to expression, expressed by the venom gland.

Its subcellular location is the secreted. This chain is Neurotoxin 60.35, found in Lychas mucronatus (Chinese swimming scorpion).